Reading from the N-terminus, the 397-residue chain is MARKLFTSESVTEGHPDKICDQISDAVLDAIFSQDPMARVACETAVTTGLVLVTGEITTNCYVDIPKIVRSTIREIGYDRAKYGFDCDTCAVLTSIDEQSPDIAMGVNKALEAKTGEMSDEEIEAIGAGDQGMMFGFACDETPELMPMPISLAHKLAMRLSQVRKNGTLNYLRPDGKSQVTVEYDGDKPVRVDTVLISTQHGPEVDYDTIKRDVIEHVIKPVIPAELLDSKTKYLVNPTGRFVIGGPQGDSGLTGRKIIVDTYGGYARHGGGAFSGKDPTKVDRSAAYAARYVAKNIVAAGLARKCEVQLAYAIGVARPVSVRVDTFGTGIIPEEKIESLVNKYFDLRPAGIIKTLDLRRPIYKQTAAYGHFGRTDIDLPWERTDKAEELRKEAQSL.

His-15 contacts ATP. Residue Asp-17 coordinates Mg(2+). A K(+)-binding site is contributed by Glu-43. Positions 56 and 99 each coordinate L-methionine. Positions Gln-99–Lys-109 are flexible loop. ATP is bound by residues Asp-175–Lys-177, Arg-241–Phe-242, Asp-250, Arg-256–Lys-257, Ala-273, and Lys-277. Asp-250 lines the L-methionine pocket. An L-methionine-binding site is contributed by Lys-281.

Belongs to the AdoMet synthase family. As to quaternary structure, homotetramer; dimer of dimers. Mg(2+) serves as cofactor. K(+) is required as a cofactor.

It is found in the cytoplasm. The catalysed reaction is L-methionine + ATP + H2O = S-adenosyl-L-methionine + phosphate + diphosphate. Its pathway is amino-acid biosynthesis; S-adenosyl-L-methionine biosynthesis; S-adenosyl-L-methionine from L-methionine: step 1/1. Functionally, catalyzes the formation of S-adenosylmethionine (AdoMet) from methionine and ATP. The overall synthetic reaction is composed of two sequential steps, AdoMet formation and the subsequent tripolyphosphate hydrolysis which occurs prior to release of AdoMet from the enzyme. The polypeptide is S-adenosylmethionine synthase (Acetivibrio thermocellus (strain ATCC 27405 / DSM 1237 / JCM 9322 / NBRC 103400 / NCIMB 10682 / NRRL B-4536 / VPI 7372) (Clostridium thermocellum)).